The sequence spans 1129 residues: MARYTQRPENALKRANEFIEVGKPLRALDTLQEVFRNKRWNYAYSETVIEPLMFKYLYLCVELKKSHIAKEGLFQYRNMFQLVNVNSLENVIRGYLKMAEEHTEAAQAQSSAAVAVLELDDLDNIATPESILMSAVCGEDAQDRSDRTILLPWVKFLWESYCQCLELLRVNTHCEALYHDIARMAFQFCLKYNRKSEFRRLCDKLRKHLEDICKSSNQTTGVSINKVETQQLCLDTRLYLLDSAIQMELWQEAYKAIEDIHGLMAMSKKTPVPKTMANYYQKLAMVFSKAGNQLFHAAALLKLFQLTRELKKNLTKDDLQRMAAHVLLATLSIPLPSAHPEFDRFIEADKSPLEKAQKLAVLLGLPQPPTRVSLIREVVRLNVPNLVSEDFRNLYNWLEVDFNPLNLCKRIQSIVDTIEASETENTLLTPYIQSLKDVTIMRLIRQISQVYESIEFKRLLELAPFCNIFELEKLLVESVRHNDMQIRIDHQRNSIYFGTDLTESQREYRPDGPTLQSMPSEQIRSQLVNMSTVLTRAVSIVYPNRERDQRAKLRSQMVQHYHEIKDREHQRILQRQKIIEDRKEFIEKQNNAREEEEARRHEEESRKAKLAEQKRLEQEQEERERKRHENEIQAIKEKSLKEKVQQISQTAHGKKMLSKLDEEGIKKLDAEQIAMRESEELQRERKELQSKLKSQEKKIDYFERAKRLEEIPLFEKYLAEKNVKDKEFWEATEATRIENAIAERKDAVSQQERLKRMYPDRDEFLEALKKERASLFVEKLKKFEIALAEERKKRLAERVVRRREERRQAYLRAKEEERFRKEEEIRLAREAEERAAAEARRLEREAEDEKRRQQYEKQRAKEEEAERKIQEDRERLAREVAVERERSEKERDVWRPRGDRSERPSAAPAGGASEWRRNAPTSDRNDRNDRNERNDRSDRNDRNDRSERIERSDRNDRPERKDTDGGADSSWRVRREPVEPQRERGGGAGGGPSGRDDKWRRGGDRSERLGGDRDRDRDRDSFRRNDGPRRDDDRGGFRRDDQPQRDTGSNWRDSPRQNDRDNRDNRRPAGDRRDIRGAGPKEGGGGGGGGNWRTAPSPRDEKPPVKRDQPQDKENKAGDDGEWTSVKRR.

A PCI domain is found at 319–502 (LQRMAAHVLL…NSIYFGTDLT (184 aa)). 2 disordered regions span residues 590–633 (NNAR…NEIQ) and 836–1129 (AAEA…VKRR). Basic and acidic residues-rich tracts occupy residues 836–903 (AAEA…RSER), 923–964 (DRND…KDTD), 971–985 (WRVR…RERG), 994–1044 (GRDD…DQPQ), and 1053–1076 (DSPR…RDIR). A compositionally biased stretch (gly residues) spans 1080 to 1091 (PKEGGGGGGGGN). The segment covering 1098–1119 (PRDEKPPVKRDQPQDKENKAGD) has biased composition (basic and acidic residues).

The protein belongs to the eIF-3 subunit A family. In terms of assembly, component of the eukaryotic translation initiation factor 3 (eIF-3) complex. The eIF-3 complex interacts with pix.

It localises to the cytoplasm. In terms of biological role, RNA-binding component of the eukaryotic translation initiation factor 3 (eIF-3) complex, which is involved in protein synthesis of a specialized repertoire of mRNAs and, together with other initiation factors, stimulates binding of mRNA and methionyl-tRNAi to the 40S ribosome. The eIF-3 complex specifically targets and initiates translation of a subset of mRNAs involved in cell proliferation. In Drosophila mojavensis (Fruit fly), this protein is Eukaryotic translation initiation factor 3 subunit A.